Here is a 195-residue protein sequence, read N- to C-terminus: Imidazoleglycerol-phosphate dehydratase (195 aa).

It belongs to the imidazoleglycerol-phosphate dehydratase family.

The protein resides in the cytoplasm. It catalyses the reaction D-erythro-1-(imidazol-4-yl)glycerol 3-phosphate = 3-(imidazol-4-yl)-2-oxopropyl phosphate + H2O. It participates in amino-acid biosynthesis; L-histidine biosynthesis; L-histidine from 5-phospho-alpha-D-ribose 1-diphosphate: step 6/9. The sequence is that of Imidazoleglycerol-phosphate dehydratase from Burkholderia cenocepacia (strain ATCC BAA-245 / DSM 16553 / LMG 16656 / NCTC 13227 / J2315 / CF5610) (Burkholderia cepacia (strain J2315)).